A 365-amino-acid polypeptide reads, in one-letter code: Outer capsid protein sigma-3 (365 aa).

Residues 51–73 form a CCHC-type zinc finger; the sequence is CMHCLGVVGSLQRKLKHLPHHKC.

The protein belongs to the orthoreovirus sigma-3 protein family. As to quaternary structure, heterohexamer of three sigma-3 and three Mu-1 proteins. The RNA-binding form is probably a homodimer. Post-translationally, cleaved during virus the endosomal proteolytic disassembly of the outer capsid.

The protein resides in the virion. The protein localises to the host cytoplasm. It is found in the host nucleus. In terms of biological role, stimulates translation by blocking the activation of the dsRNA-dependent protein kinase EIF2AK2/PKR, thereby inhibiting the host interferon response. Sigma3 prevents the activation of EIF2AK2 by competing with the kinase for dsRNA-binding. Its function is as follows. The viral outer shell polypeptides, of which sigma-3 is one, impose structural constraints that prevent elongation of nascent transcripts by the RNA-dependent RNA polymerase lambda-3. This chain is Outer capsid protein sigma-3 (S4), found in Mammalia (T2J).